We begin with the raw amino-acid sequence, 663 residues long: Rho GTPase-activating protein 18 (663 aa).

Disordered regions lie at residues 14–73 (AYHP…DESM) and 85–106 (RSNE…DEGE). Positions 27–37 (SHVKGGDEATS) are enriched in basic and acidic residues. Polar residues predominate over residues 38–51 (SRRYGQYTINQEGS). Phosphoserine occurs at positions 65 and 68. The span at 85–102 (RSNENRQEGQEAIVVKEP) shows a compositional bias: basic and acidic residues. Threonine 156 carries the phosphothreonine modification. Disordered stretches follow at residues 173 to 228 (FAQQ…PASE) and 245 to 277 (KEFS…TRIG). Basic and acidic residues-rich tracts occupy residues 178-205 (EAQE…KDDQ) and 212-222 (DSKEQISRVPE). A phosphoserine mark is found at serine 260 and serine 263. Residues 324-523 (IPLTILLEQD…LLIRYQKILW (200 aa)) form the Rho-GAP domain. Serine 610 carries the post-translational modification Phosphoserine.

Interacts with MPHOSPH6. In terms of tissue distribution, widely expressed: expressed in most organs, except small intestine.

Its subcellular location is the cytoplasm. Its function is as follows. Rho GTPase activating protein that suppresses F-actin polymerization by inhibiting Rho. Rho GTPase activating proteins act by converting Rho-type GTPases to an inactive GDP-bound state. Plays a key role in tissue tension and 3D tissue shape by regulating cortical actomyosin network formation. Acts downstream of YAP1 and inhibits actin polymerization, which in turn reduces nuclear localization of YAP1. Regulates cell shape, spreading, and migration. The polypeptide is Rho GTPase-activating protein 18 (Mus musculus (Mouse)).